The following is a 164-amino-acid chain: Phosphopantetheine adenylyltransferase (164 aa).

Ser-9 is a binding site for substrate. ATP-binding positions include 9-10 and His-17; that span reads SF. Positions 41, 73, and 87 each coordinate substrate. Residues 88–90, Glu-98, and 123–129 contribute to the ATP site; these read GLR and YSYISSS.

Belongs to the bacterial CoaD family. Homohexamer. It depends on Mg(2+) as a cofactor.

It is found in the cytoplasm. The catalysed reaction is (R)-4'-phosphopantetheine + ATP + H(+) = 3'-dephospho-CoA + diphosphate. It functions in the pathway cofactor biosynthesis; coenzyme A biosynthesis; CoA from (R)-pantothenate: step 4/5. Reversibly transfers an adenylyl group from ATP to 4'-phosphopantetheine, yielding dephospho-CoA (dPCoA) and pyrophosphate. The polypeptide is Phosphopantetheine adenylyltransferase (Clostridium perfringens (strain 13 / Type A)).